The chain runs to 83 residues: Small ribosomal subunit protein bS16 (83 aa).

Belongs to the bacterial ribosomal protein bS16 family.

This Shewanella amazonensis (strain ATCC BAA-1098 / SB2B) protein is Small ribosomal subunit protein bS16.